The primary structure comprises 110 residues: U12-hexatoxin-Hi1a (110 aa).

Residues 1–18 (MRVALVFLVLSILAATHG) form the signal peptide. 3 disulfide bridges follow: C72/C86, C79/C91, and C85/C104.

As to expression, expressed by the venom gland.

It localises to the secreted. In terms of biological role, probable ion channel inhibitor. This chain is U12-hexatoxin-Hi1a, found in Hadronyche infensa (Fraser island funnel-web spider).